The following is a 155-amino-acid chain: Protein-export protein SecB (155 aa).

Belongs to the SecB family. As to quaternary structure, homotetramer, a dimer of dimers. One homotetramer interacts with 1 SecA dimer.

The protein localises to the cytoplasm. Functionally, one of the proteins required for the normal export of preproteins out of the cell cytoplasm. It is a molecular chaperone that binds to a subset of precursor proteins, maintaining them in a translocation-competent state. It also specifically binds to its receptor SecA. The polypeptide is Protein-export protein SecB (Paramagnetospirillum magneticum (strain ATCC 700264 / AMB-1) (Magnetospirillum magneticum)).